The sequence spans 330 residues: Putative quinone oxidoreductase YhfP (330 aa).

NADP(+) is bound by residues Tyr45, 160–163, 182–184, Arg202, Leu248, Ile262, Ser273, and Asn320; these read TGGV and TGN.

It belongs to the zinc-containing alcohol dehydrogenase family. Quinone oxidoreductase subfamily. In terms of assembly, homodimer, or homotetramer.

It is found in the cytoplasm. The chain is Putative quinone oxidoreductase YhfP (yhfP) from Bacillus subtilis (strain 168).